The following is a 79-amino-acid chain: Small ribosomal subunit protein uS17 (79 aa).

It belongs to the universal ribosomal protein uS17 family. Part of the 30S ribosomal subunit.

Its function is as follows. One of the primary rRNA binding proteins, it binds specifically to the 5'-end of 16S ribosomal RNA. This is Small ribosomal subunit protein uS17 from Paramagnetospirillum magneticum (strain ATCC 700264 / AMB-1) (Magnetospirillum magneticum).